The following is a 69-amino-acid chain: Large ribosomal subunit protein bL28 (69 aa).

The protein belongs to the bacterial ribosomal protein bL28 family.

The protein is Large ribosomal subunit protein bL28 of Nitratidesulfovibrio vulgaris (strain ATCC 29579 / DSM 644 / CCUG 34227 / NCIMB 8303 / VKM B-1760 / Hildenborough) (Desulfovibrio vulgaris).